A 340-amino-acid chain; its full sequence is Speriolin-like protein (340 aa).

Disordered regions lie at residues 42–73 and 94–135; these read GGGHDLLPPRAHAYPEAGSPGSGVPDFGRFTS and APLS…KLSP. Ser-60 bears the Phosphoserine mark. Residues 123 to 133 show a composition bias toward basic and acidic residues; it reads PHSHRGTDRKL. Ser-134 bears the Phosphoserine mark.

Belongs to the speriolin family.

The protein localises to the cytoplasm. In Homo sapiens (Human), this protein is Speriolin-like protein (SPATC1L).